Reading from the N-terminus, the 478-residue chain is MKKSAIILSKIILILTLLLSFGMSWNNVFSNTKNSIVSREISPSLAPMLEKVMPSVISINIEGSAITRTSRLPHQFQPFFGDNSPFCQGNSPFRHSPFCHINPDSDDKKEKFRALGSGVIINADKGYAVTNNHVVENANKIQVQLSDGRRYEARVIGKDSRSDIALIQLKNANNLSEIKIADSDNLRVGDYTVAIGNPYGLGETVTSGIISALGRSGLNIEHYENFIQTDAAINRGNSGGALVNLKGELIGINTAILAPDGGNIGIGFAIPCNMVKNLTAQMVQFGQVRRGELGIMGMELNSDLAQIMKINSQKGAFVSRVLPNSSAFEAGIKAGDIIISLNRKPISSFSSLRAEIGSLPVATKMELGVFREGRIKNITVELKHSVKHNLNSENDYIGIEGVDLSDYIFNEQKVIKVDNVKPHTPASKIGFKKDDIILNVNQKLISNVDELKKFLHSKPKILVFNIKRGNDTIYLVSE.

An N-terminal signal peptide occupies residues 1-26 (MKKSAIILSKIILILTLLLSFGMSWN). The cysteines at positions 87 and 99 are disulfide-linked. The segment at 116-254 (GSGVIINADK…LKGELIGINT (139 aa)) is serine protease. Catalysis depends on charge relay system residues histidine 133, aspartate 163, and serine 238. 2 PDZ domains span residues 281-372 (QMVQ…VFRE) and 387-469 (KHNL…IKRG).

It belongs to the peptidase S1C family.

This is Probable serine protease do-like (degP) from Buchnera aphidicola subsp. Acyrthosiphon pisum (strain APS) (Acyrthosiphon pisum symbiotic bacterium).